Consider the following 358-residue polypeptide: Forkhead box protein I1c (358 aa).

Positions 1 to 13 are enriched in polar residues; the sequence is MNSIHLPSHQRTS. Disordered stretches follow at residues 1-25 and 191-255; these read MNSIHLPSHQRTSAPGLHQHRPKGA and DNGN…PSGI. A DNA-binding region (fork-head) is located at residues 106 to 200; it reads RPPYSYSALI…DNGNFRRKRK (95 aa).

It localises to the nucleus. Probable transcription factor. This Xenopus tropicalis (Western clawed frog) protein is Forkhead box protein I1c.